The sequence spans 409 residues: Tyrosine--tRNA ligase (409 aa).

Tyr-39 is a binding site for L-tyrosine. Residues 44–53 carry the 'HIGH' region motif; that stretch reads PTAPSLHVGS. The L-tyrosine site is built by Tyr-176 and Gln-180. Residues 236 to 240 carry the 'KMSKS' region motif; sequence KMGKT. Lys-239 lines the ATP pocket. Residues 346–409 form the S4 RNA-binding domain; the sequence is IGIVDALVGL…KKKHGILRKA (64 aa).

Belongs to the class-I aminoacyl-tRNA synthetase family. TyrS type 1 subfamily. As to quaternary structure, homodimer.

The protein localises to the cytoplasm. It carries out the reaction tRNA(Tyr) + L-tyrosine + ATP = L-tyrosyl-tRNA(Tyr) + AMP + diphosphate + H(+). In terms of biological role, catalyzes the attachment of tyrosine to tRNA(Tyr) in a two-step reaction: tyrosine is first activated by ATP to form Tyr-AMP and then transferred to the acceptor end of tRNA(Tyr). This Novosphingobium aromaticivorans (strain ATCC 700278 / DSM 12444 / CCUG 56034 / CIP 105152 / NBRC 16084 / F199) protein is Tyrosine--tRNA ligase.